Reading from the N-terminus, the 860-residue chain is Spindle and centriole-associated protein 1 (860 aa).

4 disordered regions span residues 127–150 (RKRT…GINQ), 172–201 (DDAG…HSNR), 230–250 (ATQS…AEDQ), and 294–332 (PLLA…TGSS). Polar residues-rich tracts occupy residues 139-150 (PDSSQSHTGINQ), 190-200 (ELPNSLSQHSN), and 230-245 (ATQS…SSEL). Residue Thr-236 is modified to Phosphothreonine. Phosphoserine is present on Ser-240. The segment covering 317–329 (SSSTASADRPSST) has biased composition (low complexity). A coiled-coil region spans residues 383–439 (RYLKESEIQLRKEVETRQQLEQMLGDHRELIDALTAEILSLREENSTMQARLQQYMV). Residues 623–645 (PAFVSLSQPPCSSLPSTQQPRNP) are disordered. The segment covering 627 to 642 (SLSQPPCSSLPSTQQP) has biased composition (low complexity). Position 648 is a phosphoserine (Ser-648). The interval 693-718 (ITSSGGEQGDGLREPRKQGSASEVST) is disordered. A coiled-coil region spans residues 729 to 757 (SSMEERIAELNRQSMEARSKLLQLIEQQK). Ser-765, Ser-766, Ser-769, and Ser-824 each carry phosphoserine. The interval 792–860 (GMEASESSKC…GWFALSAHIP (69 aa)) is disordered. Positions 804-824 (VSPVSGNSSRRSSGAISNSCS) are enriched in low complexity.

As to quaternary structure, interacts with CEP120.

The protein localises to the cytoplasm. It is found in the cytoskeleton. The protein resides in the microtubule organizing center. It localises to the centrosome. Its subcellular location is the centriole. The protein localises to the spindle. Functionally, regulator required for centriole duplication, for proper bipolar spindle formation and chromosome congression in mitosis. The protein is Spindle and centriole-associated protein 1 (Spice1) of Mus musculus (Mouse).